The following is an 838-amino-acid chain: Leucine--tRNA ligase (838 aa).

The short motif at 36 to 46 (PYPSGKIHMGH) is the 'HIGH' region element. A 'KMSKS' region motif is present at residues 611-615 (KMSKS). An ATP-binding site is contributed by Lys614.

This sequence belongs to the class-I aminoacyl-tRNA synthetase family.

The protein resides in the cytoplasm. The catalysed reaction is tRNA(Leu) + L-leucine + ATP = L-leucyl-tRNA(Leu) + AMP + diphosphate. This Wolbachia pipientis wMel protein is Leucine--tRNA ligase.